We begin with the raw amino-acid sequence, 1675 residues long: Coadhesin (1675 aa).

At 1-1356 (QGNYYSYGGT…TIADQADAAK (1356 aa)) the chain is on the extracellular side. One can recognise an F5/8 type C 1 domain in the interval 11–160 (TPGTPIGCTN…ICMRVGVESC (150 aa)). TSP type-1 domains are found at residues 168–220 (NGAW…NDCV), 224–279 (NGGW…QFCP), 281–336 (DGGW…QCCP), 338–393 (HGGW…QTCP), 403–458 (NGNY…IPCP), 460–515 (NGNW…TACP), and 517–572 (DGGW…GPCP). 21 disulfide bridges follow: cysteine 180–cysteine 216, cysteine 184–cysteine 219, cysteine 194–cysteine 206, cysteine 236–cysteine 273, cysteine 240–cysteine 278, cysteine 251–cysteine 263, cysteine 293–cysteine 330, cysteine 297–cysteine 335, cysteine 308–cysteine 320, cysteine 350–cysteine 387, cysteine 354–cysteine 392, cysteine 365–cysteine 377, cysteine 415–cysteine 452, cysteine 419–cysteine 457, cysteine 430–cysteine 442, cysteine 472–cysteine 509, cysteine 476–cysteine 514, cysteine 487–cysteine 499, cysteine 528–cysteine 566, cysteine 532–cysteine 571, and cysteine 543–cysteine 555. The interval 567-588 (NKGPCPTSPPTISPPTTGSPAD) is disordered. 3 consecutive VWFA domains span residues 595-769 (DLVF…MDRI), 778-958 (DIGF…FKAL), and 966-1141 (DLTF…ISII). Residues 1144–1198 (PSGLSKWSSWSACSKTCRYLGKAGTQIRTRDCKIPELGCDGMRIDTVECNKMDCE) enclose the TSP type-1 8 domain. Disulfide bonds link cysteine 1156-cysteine 1192, cysteine 1160-cysteine 1197, and cysteine 1175-cysteine 1182. Residues 1192-1336 (CNKMDCEGCG…PCMQAAVFGC (145 aa)) form the F5/8 type C 2 domain. The helical transmembrane segment at 1357–1377 (GILIVLWILAGILTFLLLMAC) threads the bilayer. Residues 1378–1675 (CYYCCWHVCC…RGEEWYSRWG (298 aa)) lie on the Cytoplasmic side of the membrane. Residues 1463–1480 (EKHVTAEDVKSEKPKYSE) show a composition bias toward basic and acidic residues. The disordered stretch occupies residues 1463-1491 (EKHVTAEDVKSEKPKYSEEASSGTIKSGS). Residues 1481–1491 (EASSGTIKSGS) are compositionally biased toward polar residues.

Component of the acid-insoluble and acid-soluble organic matrix of the aragonitic skeleton (at protein level).

The protein localises to the membrane. This chain is Coadhesin, found in Acropora millepora (Staghorn coral).